A 60-amino-acid chain; its full sequence is Cytotoxin 10 (60 aa).

Intrachain disulfides connect Cys-3/Cys-21, Cys-14/Cys-38, Cys-42/Cys-53, and Cys-54/Cys-59.

Belongs to the three-finger toxin family. Short-chain subfamily. Type IA cytotoxin sub-subfamily. As to quaternary structure, monomer in solution; Homodimer and oligomer in the presence of negatively charged lipids forming a pore with a size ranging between 20 and 30 Angstroms. Expressed by the venom gland.

The protein localises to the secreted. It localises to the target cell membrane. Functionally, shows cytolytic activity on many different cells by forming pore in lipid membranes. In vivo, increases heart rate or kills the animal by cardiac arrest. In addition, it binds to heparin with high affinity, interacts with Kv channel-interacting protein 1 (KCNIP1) in a calcium-independent manner, and binds to integrin alpha-V/beta-3 (ITGAV/ITGB3) with moderate affinity. Has hemolytic activity towards human erythrocytes (EC(50)=0.162 uM) and cytolytic activity towards various cell lines. This is Cytotoxin 10 from Naja naja (Indian cobra).